A 303-amino-acid chain; its full sequence is Hydroxyethylthiazole kinase (303 aa).

Positions 1 to 15 are enriched in polar residues; the sequence is MTTASTTPNSDTSNL. The segment at 1-23 is disordered; that stretch reads MTTASTTPNSDTSNLHEVAPDDP. Methionine 67 provides a ligand contact to substrate. Positions 142 and 206 each coordinate ATP. Residue glycine 233 coordinates substrate.

This sequence belongs to the Thz kinase family. Mg(2+) is required as a cofactor.

The enzyme catalyses 5-(2-hydroxyethyl)-4-methylthiazole + ATP = 4-methyl-5-(2-phosphooxyethyl)-thiazole + ADP + H(+). Its pathway is cofactor biosynthesis; thiamine diphosphate biosynthesis; 4-methyl-5-(2-phosphoethyl)-thiazole from 5-(2-hydroxyethyl)-4-methylthiazole: step 1/1. Catalyzes the phosphorylation of the hydroxyl group of 4-methyl-5-beta-hydroxyethylthiazole (THZ). The protein is Hydroxyethylthiazole kinase of Bifidobacterium animalis subsp. lactis (strain AD011).